The chain runs to 792 residues: Endonuclease MutS2 (792 aa).

335–342 is a binding site for ATP; the sequence is GPNTGGKT. Residues 717–792 form the Smr domain; the sequence is VDLRGLNLEE…GAGVTIVKLK (76 aa).

Belongs to the DNA mismatch repair MutS family. MutS2 subfamily. Homodimer. Binds to stalled ribosomes, contacting rRNA.

In terms of biological role, endonuclease that is involved in the suppression of homologous recombination and thus may have a key role in the control of bacterial genetic diversity. Its function is as follows. Acts as a ribosome collision sensor, splitting the ribosome into its 2 subunits. Detects stalled/collided 70S ribosomes which it binds and splits by an ATP-hydrolysis driven conformational change. Acts upstream of the ribosome quality control system (RQC), a ribosome-associated complex that mediates the extraction of incompletely synthesized nascent chains from stalled ribosomes and their subsequent degradation. Probably generates substrates for RQC. This Clostridioides difficile (strain 630) (Peptoclostridium difficile) protein is Endonuclease MutS2.